Consider the following 218-residue polypeptide: Kappa-scoloptoxin(11)-Ssd1b (218 aa).

Positions 1 to 16 (MFYSHLLFFTFTFACS) are cleaved as a signal peptide. The propeptide occupies 17 to 25 (SSLNRKTKR).

In terms of processing, contains 8 disulfide bonds. As to expression, expressed by the venom gland.

It localises to the secreted. Its function is as follows. Voltage-gated potassium channel inhibitor. The sequence is that of Kappa-scoloptoxin(11)-Ssd1b from Scolopendra dehaani (Thai centipede).